We begin with the raw amino-acid sequence, 419 residues long: MRNIFKRNQEPIVAPATTTATMPIGPVDNSTESGGAGESQEDMFAKLKEKLFNEINKIPLPPWALIAIAVVAGLLLLTCCFCICKKCCCKKKKNKKEKGKGMKNAMNMKDMKGGQDDDDAETGLTEGEGEGEEEKEPENLGKLQFSLDYDFQANQLTVGVLQAAELPALDMGGTSDPYVKVFLLPDKKKKYETKVHRKTLNPAFNETFTFKVPYQELGGKTLVMAIYDFDRFSKHDIIGEVKVPMNTVDLGQPIEEWRDLQGGEKEEPEKLGDICTSLRYVPTAGKLTVCILEAKNLKKMDVGGLSDPYVKIHLMQNGKRLKKKKTTVKKKTLNPYFNESFSFEIPFEQIQKVQVVVTVLDYDKLGKNEAIGKIFVGSNATGTELRHWSDMLANPRRPIAQWHSLKPEEEVDALLGKNK.

Over 1–62 the chain is Vesicular; sequence MRNIFKRNQE…NEINKIPLPP (62 aa). The disordered stretch occupies residues 16–39; that stretch reads ATTTATMPIGPVDNSTESGGAGES. The N-linked (GlcNAc...) asparagine glycan is linked to Asn29. The chain crosses the membrane as a helical span at residues 63 to 83; it reads WALIAIAVVAGLLLLTCCFCI. Topologically, residues 84-419 are cytoplasmic; the sequence is CKKCCCKKKK…EVDALLGKNK (336 aa). The disordered stretch occupies residues 99–138; sequence GKGMKNAMNMKDMKGGQDDDDAETGLTEGEGEGEEEKEPE. The span at 116–136 shows a compositional bias: acidic residues; it reads DDDDAETGLTEGEGEGEEEKE. 2 positions are modified to phosphothreonine: Thr122 and Thr125. The tract at residues 133 to 379 is phospholipid binding; that stretch reads EEKEPENLGK…AIGKIFVGSN (247 aa). 2 consecutive C2 domains span residues 139–258 and 270–403; these read NLGK…EEWR and KLGD…AQWH. Leu169, Asp170, and Asp176 together coordinate Ca(2+). At Thr199 the chain carries Phosphothreonine. Residue Tyr227 is modified to Phosphotyrosine. Residues Asp228, Phe229, Asp230, Ser233, Lys234, Asp236, Asp301, Asp307, Asp361, and Asp363 each contribute to the Ca(2+) site. At Thr383 the chain carries Phosphothreonine.

Belongs to the synaptotagmin family. In terms of assembly, homotetramer. Heterodimer; heterodimerizes with SYT1 in presence of calcium. Interacts with STON2. Interacts with SCAMP5. Interacts with PRRT2. The cofactor is Ca(2+). Phosphorylation at Thr-199 by WNK1, changes the calcium requirement for SYT2-binding to phospholipid membranes. Expressed at the neuromuscular junction. Expressed in melanocytes.

It localises to the cytoplasmic vesicle. The protein localises to the secretory vesicle. The protein resides in the synaptic vesicle membrane. It is found in the chromaffin granule membrane. Its subcellular location is the cytoplasm. In terms of biological role, exhibits calcium-dependent phospholipid and inositol polyphosphate binding properties. May have a regulatory role in the membrane interactions during trafficking of synaptic vesicles at the active zone of the synapse. Plays a role in dendrite formation by melanocytes. The polypeptide is Synaptotagmin-2 (Homo sapiens (Human)).